The chain runs to 787 residues: Pleckstrin homology domain-containing family G member 6 (787 aa).

The 193-residue stretch at 161 to 353 folds into the DH domain; sequence HQQEALWELL…ESFLRHINGQ (193 aa). The PH domain occupies 409 to 509; it reads QLLLEGPVRV…WLEKTQHAQT (101 aa). The interval 533–762 is disordered; it reads QGTESPSTRP…EPGNGKPRRL (230 aa). Over residues 535–557 the composition is skewed to low complexity; that stretch reads TESPSTRPSTPSPSPEDSQSSAE. Basic and acidic residues predominate over residues 724–742; that stretch reads LRPRSLREDMLREIREELA.

Interacts with MYH10. Interacts with ELMO1 and EZR (in an open conformation). Interacts with CSPP1.

It localises to the cell projection. Its subcellular location is the microvillus. The protein localises to the cytoplasm. The protein resides in the cytoskeleton. It is found in the spindle. It localises to the cleavage furrow. Functionally, guanine nucleotide exchange factor activating the small GTPase RHOA, which, in turn, induces myosin filament formation. Also activates RHOG. Does not activate RAC1, or to a much lower extent than RHOA and RHOG. Part of a functional unit, involving PLEKHG6, MYH10 and RHOA, at the cleavage furrow to advance furrow ingression during cytokinesis. In epithelial cells, required for the formation of microvilli and membrane ruffles on the apical pole. Along with EZR, required for normal macropinocytosis. The sequence is that of Pleckstrin homology domain-containing family G member 6 (Plekhg6) from Mus musculus (Mouse).